The sequence spans 286 residues: Phosphatidylserine decarboxylase proenzyme (286 aa).

Catalysis depends on charge relay system; for autoendoproteolytic cleavage activity residues Asp-88, His-145, and Ser-251. Ser-251 functions as the Schiff-base intermediate with substrate; via pyruvic acid; for decarboxylase activity in the catalytic mechanism. Position 251 is a pyruvic acid (Ser); by autocatalysis (Ser-251).

Belongs to the phosphatidylserine decarboxylase family. PSD-B subfamily. Prokaryotic type I sub-subfamily. Heterodimer of a large membrane-associated beta subunit and a small pyruvoyl-containing alpha subunit. It depends on pyruvate as a cofactor. In terms of processing, is synthesized initially as an inactive proenzyme. Formation of the active enzyme involves a self-maturation process in which the active site pyruvoyl group is generated from an internal serine residue via an autocatalytic post-translational modification. Two non-identical subunits are generated from the proenzyme in this reaction, and the pyruvate is formed at the N-terminus of the alpha chain, which is derived from the carboxyl end of the proenzyme. The autoendoproteolytic cleavage occurs by a canonical serine protease mechanism, in which the side chain hydroxyl group of the serine supplies its oxygen atom to form the C-terminus of the beta chain, while the remainder of the serine residue undergoes an oxidative deamination to produce ammonia and the pyruvoyl prosthetic group on the alpha chain. During this reaction, the Ser that is part of the protease active site of the proenzyme becomes the pyruvoyl prosthetic group, which constitutes an essential element of the active site of the mature decarboxylase.

The protein localises to the cell membrane. It carries out the reaction a 1,2-diacyl-sn-glycero-3-phospho-L-serine + H(+) = a 1,2-diacyl-sn-glycero-3-phosphoethanolamine + CO2. The protein operates within phospholipid metabolism; phosphatidylethanolamine biosynthesis; phosphatidylethanolamine from CDP-diacylglycerol: step 2/2. Its function is as follows. Catalyzes the formation of phosphatidylethanolamine (PtdEtn) from phosphatidylserine (PtdSer). This chain is Phosphatidylserine decarboxylase proenzyme, found in Verminephrobacter eiseniae (strain EF01-2).